Reading from the N-terminus, the 416-residue chain is Glutamyl-tRNA reductase (416 aa).

Residues 50–53, Ser109, 114–116, and Gln120 each bind substrate; these read TCNR and EPQ. Cys51 (nucleophile) is an active-site residue. Position 189-194 (189-194) interacts with NADP(+); sequence GAGEMI.

This sequence belongs to the glutamyl-tRNA reductase family. In terms of assembly, homodimer.

It catalyses the reaction (S)-4-amino-5-oxopentanoate + tRNA(Glu) + NADP(+) = L-glutamyl-tRNA(Glu) + NADPH + H(+). Its pathway is porphyrin-containing compound metabolism; protoporphyrin-IX biosynthesis; 5-aminolevulinate from L-glutamyl-tRNA(Glu): step 1/2. Functionally, catalyzes the NADPH-dependent reduction of glutamyl-tRNA(Glu) to glutamate 1-semialdehyde (GSA). The chain is Glutamyl-tRNA reductase from Ruthia magnifica subsp. Calyptogena magnifica.